The chain runs to 344 residues: Trace amine-associated receptor 8b (344 aa).

The Extracellular portion of the chain corresponds to 1–31 (MTSNFSQPALQLCYENTNGSCIKTPYSPGPR). 2 N-linked (GlcNAc...) asparagine glycosylation sites follow: N4 and N18. Disulfide bonds link C21–C185 and C104–C189. The chain crosses the membrane as a helical span at residues 32-52 (VILYMVFGFGAVLAVCGNLLV). Residues 53-67 (VISVLHFKQLHSPAN) are Cytoplasmic-facing. Residues 68–88 (FLIASLASADFLVGISVMPFS) traverse the membrane as a helical segment. The Extracellular segment spans residues 89 to 111 (MVRSIESCWYFGDAFCSLHSCCD). A helical transmembrane segment spans residues 112 to 132 (VAFCYSSALHLCFISVDRYIA). Residues 133 to 146 (VTDPLVYPTKFTVS) lie on the Cytoplasmic side of the membrane. The helical transmembrane segment at 147-167 (VSGICISISWILPLVYSSAVF) threads the bilayer. Residues 168-195 (YTGISAKGIESLVSALNCVGGCQIVVNQ) lie on the Extracellular side of the membrane. The chain crosses the membrane as a helical span at residues 196-216 (DWVLIDFLLFFIPTLVMIILY). Over 217–260 (SKIFLVAKQQAVKIETSVSDNRGESSSESHKARVAKRERKAAKT) the chain is Cytoplasmic. The chain crosses the membrane as a helical span at residues 261 to 281 (LGVTVVAFMVSWLPYTIDSLV). A topological domain (extracellular) is located at residue D282. The helical transmembrane segment at 283–303 (AFVGFITPAYVYEICCWSAYY) threads the bilayer. Over 304–344 (NSAMNPLIYAFFYPWFRKAIKLILSGEILKSHSSTMSLFSE) the chain is Cytoplasmic.

This sequence belongs to the G-protein coupled receptor 1 family. In terms of tissue distribution, specifically expressed in neurons of the olfactory epithelium.

Its subcellular location is the cell membrane. Its function is as follows. Olfactory receptor specific for trace amines. Trace amine compounds are enriched in animal body fluids and act on trace amine-associated receptors (TAARs) to elicit both intraspecific and interspecific innate behaviors. Ligand-binding causes a conformation change that triggers signaling via G alpha proteins, possibly G(i)/G(o) G alpha proteins. The sequence is that of Trace amine-associated receptor 8b from Mus musculus (Mouse).